A 257-amino-acid chain; its full sequence is Ditrans,polycis-undecaprenyl-diphosphate synthase ((2E,6E)-farnesyl-diphosphate specific) (257 aa).

D34 is an active-site residue. D34 contacts Mg(2+). Residues 35-38 (GNGR), W39, R47, and H51 each bind substrate. N82 (proton acceptor) is an active-site residue. Substrate-binding positions include W83, R85, R201, and 207–209 (RLS). E220 provides a ligand contact to Mg(2+).

It belongs to the UPP synthase family. As to quaternary structure, homodimer. Mg(2+) is required as a cofactor.

The enzyme catalyses 8 isopentenyl diphosphate + (2E,6E)-farnesyl diphosphate = di-trans,octa-cis-undecaprenyl diphosphate + 8 diphosphate. Functionally, catalyzes the sequential condensation of isopentenyl diphosphate (IPP) with (2E,6E)-farnesyl diphosphate (E,E-FPP) to yield (2Z,6Z,10Z,14Z,18Z,22Z,26Z,30Z,34E,38E)-undecaprenyl diphosphate (di-trans,octa-cis-UPP). UPP is the precursor of glycosyl carrier lipid in the biosynthesis of bacterial cell wall polysaccharide components such as peptidoglycan and lipopolysaccharide. This is Ditrans,polycis-undecaprenyl-diphosphate synthase ((2E,6E)-farnesyl-diphosphate specific) from Francisella tularensis subsp. tularensis (strain SCHU S4 / Schu 4).